The following is a 514-amino-acid chain: Peptide chain release factor 3 (514 aa).

A tr-type G domain is found at 8–268; sequence KKRRTFAIIS…TFLEFAPEPH (261 aa). Residues 17-24, 85-89, and 139-142 contribute to the GTP site; these read SHPDAGKT, DTPGH, and NKLD.

It belongs to the TRAFAC class translation factor GTPase superfamily. Classic translation factor GTPase family. PrfC subfamily.

It localises to the cytoplasm. Functionally, increases the formation of ribosomal termination complexes and stimulates activities of RF-1 and RF-2. It binds guanine nucleotides and has strong preference for UGA stop codons. It may interact directly with the ribosome. The stimulation of RF-1 and RF-2 is significantly reduced by GTP and GDP, but not by GMP. This is Peptide chain release factor 3 from Streptococcus pyogenes serotype M1.